We begin with the raw amino-acid sequence, 39 residues long: Photosystem II reaction center protein L (39 aa).

Residues serine 18–phenylalanine 38 traverse the membrane as a helical segment.

Belongs to the PsbL family. In terms of assembly, PSII is composed of 1 copy each of membrane proteins PsbA, PsbB, PsbC, PsbD, PsbE, PsbF, PsbH, PsbI, PsbJ, PsbK, PsbL, PsbM, PsbT, PsbX, PsbY, PsbZ, Psb30/Ycf12, peripheral proteins PsbO, CyanoQ (PsbQ), PsbU, PsbV and a large number of cofactors. It forms dimeric complexes.

Its subcellular location is the cellular thylakoid membrane. Functionally, one of the components of the core complex of photosystem II (PSII). PSII is a light-driven water:plastoquinone oxidoreductase that uses light energy to abstract electrons from H(2)O, generating O(2) and a proton gradient subsequently used for ATP formation. It consists of a core antenna complex that captures photons, and an electron transfer chain that converts photonic excitation into a charge separation. This subunit is found at the monomer-monomer interface and is required for correct PSII assembly and/or dimerization. The polypeptide is Photosystem II reaction center protein L (Synechococcus sp. (strain CC9902)).